The primary structure comprises 244 residues: 3-oxoacyl-[acyl-carrier-protein] reductase FabG (244 aa).

Residues 12 to 15 (GANQ) and threonine 37 contribute to the NADP(+) site. Residues lysine 50 and glycine 53 each contribute to the Ca(2+) site. NADP(+) contacts are provided by residues 59–60 (DL) and asparagine 86. Serine 138 provides a ligand contact to substrate. Residue asparagine 145 participates in Ca(2+) binding. The active-site Proton acceptor is the tyrosine 151. NADP(+) contacts are provided by residues 151–155 (YSASK) and isoleucine 184. Residues glutamine 233 and threonine 234 each contribute to the Ca(2+) site.

This sequence belongs to the short-chain dehydrogenases/reductases (SDR) family. Homotetramer.

It carries out the reaction a (3R)-hydroxyacyl-[ACP] + NADP(+) = a 3-oxoacyl-[ACP] + NADPH + H(+). The protein operates within lipid metabolism; fatty acid biosynthesis. Its function is as follows. Catalyzes the NADPH-dependent reduction of beta-ketoacyl-ACP substrates to beta-hydroxyacyl-ACP products, the first reductive step in the elongation cycle of fatty acid biosynthesis. The sequence is that of 3-oxoacyl-[acyl-carrier-protein] reductase FabG (fabG) from Buchnera aphidicola subsp. Schizaphis graminum (strain Sg).